A 277-amino-acid chain; its full sequence is 3-methyl-2-oxobutanoate hydroxymethyltransferase (277 aa).

Mg(2+)-binding residues include Asp43 and Asp82. 3-methyl-2-oxobutanoate-binding positions include Asp43 to Ser44, Asp82, and Lys112. Glu114 is a Mg(2+) binding site. The active-site Proton acceptor is the Glu181.

The protein belongs to the PanB family. Homodecamer; pentamer of dimers. Mg(2+) serves as cofactor.

The protein resides in the cytoplasm. The catalysed reaction is 3-methyl-2-oxobutanoate + (6R)-5,10-methylene-5,6,7,8-tetrahydrofolate + H2O = 2-dehydropantoate + (6S)-5,6,7,8-tetrahydrofolate. It participates in cofactor biosynthesis; (R)-pantothenate biosynthesis; (R)-pantoate from 3-methyl-2-oxobutanoate: step 1/2. In terms of biological role, catalyzes the reversible reaction in which hydroxymethyl group from 5,10-methylenetetrahydrofolate is transferred onto alpha-ketoisovalerate to form ketopantoate. The polypeptide is 3-methyl-2-oxobutanoate hydroxymethyltransferase (Listeria monocytogenes serovar 1/2a (strain ATCC BAA-679 / EGD-e)).